The chain runs to 523 residues: FAD:protein FMN transferase (523 aa).

The next 3 membrane-spanning stretches (helical) occupy residues Leu88 to Ala108, Gly118 to Leu138, and Gly169 to Ala189. Residues Leu277 to Asp279 and Asp336 contribute to the FAD site. Ala339 provides a ligand contact to Mg(2+). Residues Lys342 and His423–Ile425 contribute to the FAD site. Asp450 and Thr454 together coordinate Mg(2+).

It in the N-terminal section; belongs to the RseC family. In the C-terminal section; belongs to the ApbE family. The cofactor is Mg(2+).

Its subcellular location is the cell membrane. The catalysed reaction is L-threonyl-[protein] + FAD = FMN-L-threonyl-[protein] + AMP + H(+). Its function is as follows. Flavin transferase that catalyzes the transfer of the FMN moiety of FAD and its covalent binding to the hydroxyl group of a threonine residue in a target flavoprotein. Is likely involved in the modification of RnfG and RnfD. Required for nitrogen fixation. This chain is FAD:protein FMN transferase, found in Rhodobacter capsulatus (Rhodopseudomonas capsulata).